A 133-amino-acid polypeptide reads, in one-letter code: Ribosome-binding factor A (133 aa).

This sequence belongs to the RbfA family. Monomer. Binds 30S ribosomal subunits, but not 50S ribosomal subunits or 70S ribosomes.

Its subcellular location is the cytoplasm. In terms of biological role, one of several proteins that assist in the late maturation steps of the functional core of the 30S ribosomal subunit. Associates with free 30S ribosomal subunits (but not with 30S subunits that are part of 70S ribosomes or polysomes). Required for efficient processing of 16S rRNA. May interact with the 5'-terminal helix region of 16S rRNA. This chain is Ribosome-binding factor A, found in Chelativorans sp. (strain BNC1).